The sequence spans 602 residues: Cytoskeleton-associated protein 4 (602 aa).

The interval 1-83 (MPSAKQRGSK…GGGGKSSSSS (83 aa)) is disordered. Over 1-106 (MPSAKQRGSK…SASCSRRLGR (106 aa)) the chain is Cytoplasmic. Phosphoserine is present on residues Ser3, Ser17, and Ser19. Lys21 is subject to N6-acetyllysine. Residues 35-52 (KPPPAPQQPPPPPAPHPQ) are compositionally biased toward pro residues. The span at 53-64 (QHPQQHPQNQAH) shows a compositional bias: low complexity. Residue Cys100 is the site of S-palmitoyl cysteine; by ZDHHC2 attachment. The chain crosses the membrane as a helical span at residues 107-127 (ALNFLFYLALVAAAAFSGWCV). Over 128–602 (HHVLEEVQQV…VKVEKIHEKV (475 aa)) the chain is Extracellular. Positions 130–214 (VLEEVQQVRR…QKLQNEILKD (85 aa)) form a coiled coil. Phosphoserine; by FAM20C is present on Ser232. Coiled coils occupy residues 256 to 460 (TEVQ…GLGS) and 533 to 602 (LSSL…HEKV). A Phosphoserine modification is found at Ser312.

As to quaternary structure, interacts with REEP5. Post-translationally, reversibly palmitoylated. Palmitoylation at Cys-100 by ZDHHC2 is required for its trafficking from the ER to the plasma membrane and for its perinuclear localization. Palmitoylation by ZDHHC2 is also required for its function in APF-mediated antiproliferative signaling. In terms of processing, increased phosphorylation during mitosis prevents binding to microtubules.

It is found in the endoplasmic reticulum membrane. The protein localises to the cell membrane. Its subcellular location is the cytoplasm. It localises to the cytoskeleton. The protein resides in the perinuclear region. Mediates the anchoring of the endoplasmic reticulum to microtubules. Functionally, high-affinity epithelial cell surface receptor for the FZD8-related low molecular weight sialoglycopeptide APF/antiproliferative factor. Mediates the APF antiproliferative signaling within cells. The protein is Cytoskeleton-associated protein 4 (CKAP4) of Homo sapiens (Human).